Reading from the N-terminus, the 245-residue chain is Brasilane terpene glycosides biosynthesis cluster protein D (245 aa).

C3H1-type zinc fingers lie at residues 121–152 (KELKIICPWWLTDGYSCREHDQGKCPFYHDNV) and 161–185 (ICHFWADGGRCTKSQKDCRFAHYPA). The disordered stretch occupies residues 186 to 245 (PHRVTAPMPSKKKSKKLRSSVADDASHPDLGKARRHDPRDDEQNDEVWRNQGRARPGQEW). Residues 209–226 (DASHPDLGKARRHDPRDD) show a composition bias toward basic and acidic residues.

Part of the gene cluster that mediates the biosynthesis of the brasilane terpene glycosides brasilane D and E. The biosynthesis starts with the activity of the terpene cyclase braA that converts farnesyl pyrophosphate into the sesquiterpene alcohol trichobrasilenol. Subsequently, trichobrasilenol is glycosylated by the O-glycosyltransferase braB putatively using UDP-GlcNAc as sugar donor to yield brasilane A. The latter then undergoes two rounds of oxidation performed by the cytochrome P450 monooxygenase braC. In the first round braC hydroxylates C-12 forming brasilane D, which serves as substrate in the second round to establish the epoxide at the bond between C-5 and C-10 and oxidize the alcohol at C-12 to an aldehyde leading to the final product brasilane E. This chain is Brasilane terpene glycosides biosynthesis cluster protein D, found in Annulohypoxylon truncatum (Hypoxylon truncatum).